A 434-amino-acid polypeptide reads, in one-letter code: MDSTGRQPLSQDGQPWQALASGLGFPDEDQKYWWSVMAPLLGELMKWANYPVDKQYLVLAFCHEYILPFCGPRPTAEGGIFWPTLITKDGTPFEPSLNFYKNKATLRVGYAPACELSGSNDDPINQRAPIAALEHQKRVLPQQNLKWVDNFKKAWFIDNDDAVALKARVHNELFEQAAVQCLIGYVFSDYTQVKVAMSPLWKSVQTGQQISRVIWDTFRQLGDDASSYLDCLSVLEEYTESKQAKLAQVQPSFVNFDVNLKGDYQQSRLKVYYATPCTAFDTMVQVFTLGGRLKGPEVDHAIECLRVLWPSVLAVPENHPDDQDLPRRYHSVAVTQFNFELWPGAKLPVPQIYLPTNFYGRDELEIAEGLEGFFKTLGWSEPFHAYKQNYIATCATPEGKWKAIQHDVSFSFKDSSPYVSVYYKPELSVLSSPS.

L-tryptophan-binding positions include 85–86 (LI) and E94. Substrate contacts are provided by R107, K194, R268, K270, Y272, Q351, Y353, Y418, and Y422.

It belongs to the tryptophan dimethylallyltransferase family.

It functions in the pathway secondary metabolite biosynthesis. In terms of biological role, indole diterpene prenyltransferase; part of the gene cluster that mediates the biosynthesis of the indole diterpenes nodulisporic acids (NA). Nodulisporic acid A (NAA) and its chemically modified derivatives are of particular significance because of their highly potent insecticidal activity against blood-feeding arthropods and lack of observable adverse effects on mammals, in particular the tremogenicity associated with the paspaline-derived IDTs is not observed. The geranylgeranyl diphosphate (GGPP) synthase ggs1, localized outside of the cluster, is proposed to catalyze the first step in nodulisporic acid biosynthesis via conversion of farnesyl pyrophosphate and isopentyl pyrophosphate into geranylgeranyl pyrophosphate (GGPP). Condensation of indole-3-glycerol phosphate with GGPP by the prenyl transferase nodC then forms 3-geranylgeranylindole (3-GGI). Epoxidation by the FAD-dependent monooxygenase nodM leads to a single-epoxidized-GGI that is substrate of the terpene cyclase nodB for cyclization to yield emindole SB. The terminal methyl carbon, C28, of emindole SB is then oxidized by the cytochrome P450 monooxygenase nodW to produce nodulisporic acid F (NAF), the pentacyclic core of NAA. NAF is converted to nodulisporic acid E (NAE) via prenylation. This step is probably performed by one of the indole diterpene prenyltransferases nodD1 or nodD2. Several oxidation steps performed by the FAD-linked oxidoreductase nodO and one of the cytochrome P450 monooxygenase nodR, nodX or nodZ further convert NAE to nodulisporic acid D (NAD). NAD is substrate of cytochrome P450 monooxygenase nodJ to produce the precursor of nodulisporic acid C (NAC), converted to NAC by one of the indole diterpene prenyltransferases nodD1 or nodD2. The FAD-dependent monooxygenase nodY2 then oxidizes NAC to nodulisporic acid B (NAB). Finally NAB is converted to NAA by one of the cytochrome P450 monooxygenases nodR, nodX or nodZ. This is Indole diterpene prenyltransferase nodD2 from Hypoxylon pulicicidum.